An 88-amino-acid chain; its full sequence is Small ribosomal subunit protein uS17 (88 aa).

It belongs to the universal ribosomal protein uS17 family. In terms of assembly, part of the 30S ribosomal subunit.

Its function is as follows. One of the primary rRNA binding proteins, it binds specifically to the 5'-end of 16S ribosomal RNA. This is Small ribosomal subunit protein uS17 from Ruthia magnifica subsp. Calyptogena magnifica.